Here is a 555-residue protein sequence, read N- to C-terminus: MAATGAAATDLEVVRGKRAALFFATVVIVLGLPLWWKTTETYRAPLPYSQISGLNSLKLRLMVPVTVVFTQESVPLDDQEKLPFTVVHEREIPLKYKLKIKCRFQKAYRRALDHEEAALSLGNIQEAEAMLAEPSEQAEGSLTVYVISERCSLLPQDMMSYIGPKRMAVVRGITHREAFNIIGRRIIQVVQAMSLTEDVLAAALADHLPEDKWSSDKRRPLKSSLGYEITFSLLNPDPKSHDVHWDIEGAVRRYVQPFLSALSAAGNFSVDSQILYYAVLGVNPRFDSASSSYYLAAHSLPHVINPVESRLGSSAASLYPVLNFLLYVPELAHSPLYIQDKDGAPVATNAFHSPRWGGIMVYNVDPKAYNGSQLPVRVEVDMMRVMEVFLAQLRLLFGIAQPQLPPKCLFFGPKSEGIMTWELDRLLWARSVENLATATTTLTSLAQLLGKISNIVIKDDVASEVYRAVAAVQKAAEELSSGHLASAFAASQEAVTSSERAFFDPSLLHLLYFPDDQKFAIYIPLFLPMAVPILLSLFKIFLETRKSWKKPEKTD.

The Cytoplasmic segment spans residues 2-18 (AATGAAATDLEVVRGKR). A cardiolipin-binding residues include Arg-15 and Arg-18. A helical transmembrane segment spans residues 19 to 39 (AALFFATVVIVLGLPLWWKTT). The Lumenal portion of the chain corresponds to 40–517 (ETYRAPLPYS…LHLLYFPDDQ (478 aa)). Asn-267 and Asn-370 each carry an N-linked (GlcNAc...) asparagine glycan. A helical membrane pass occupies residues 518–532 (KFAIYIPLFLPMAVP). Over 533–555 (ILLSLFKIFLETRKSWKKPEKTD) the chain is Cytoplasmic.

Belongs to the PIGS family. In terms of assembly, heteropentamer. Part of the GPI-anchor transamidase complex, consisting of PIGK, PIGT, PIGS, PIGU and GAA1.

The protein localises to the endoplasmic reticulum membrane. It functions in the pathway glycolipid biosynthesis; glycosylphosphatidylinositol-anchor biosynthesis. Its function is as follows. Component of the glycosylphosphatidylinositol-anchor (GPI-anchor) transamidase (GPI-T) complex that catalyzes the formation of the linkage between a proprotein and a GPI-anchor and participates in GPI anchored protein biosynthesis. This is GPI-anchor transamidase component PIGS from Bos taurus (Bovine).